The sequence spans 154 residues: Proline dehydrogenase transcriptional activator (154 aa).

Residues 5–66 (IDATDRRILH…MLSPIRLGLI (62 aa)) enclose the HTH asnC-type domain. A DNA-binding region (H-T-H motif) is located at residues 24–43 (VTELARKVGLSKTPVAARIR).

Its function is as follows. Transcriptional activator of the putA gene in response to proline. In Rhodobacter capsulatus (Rhodopseudomonas capsulata), this protein is Proline dehydrogenase transcriptional activator (putR).